A 75-amino-acid polypeptide reads, in one-letter code: Cytochrome c oxidase subunit 6C (75 aa).

Residues 1 to 13 (MAPEVLPKPQMRG) lie on the Mitochondrial matrix side of the membrane. A helical transmembrane segment spans residues 14 to 54 (LLARRLRFHMVTGFVLSLGVAALYKVGVADKRKKAYADFYR). Residues 55–75 (NYDAMKDFEEMRKAGIFQSVK) lie on the Mitochondrial intermembrane side of the membrane.

It belongs to the cytochrome c oxidase subunit 6c family. In terms of assembly, component of the cytochrome c oxidase (complex IV, CIV), a multisubunit enzyme composed of 14 subunits. The complex is composed of a catalytic core of 3 subunits MT-CO1, MT-CO2 and MT-CO3, encoded in the mitochondrial DNA, and 11 supernumerary subunits COX4I, COX5A, COX5B, COX6A, COX6B, COX6C, COX7A, COX7B, COX7C, COX8 and NDUFA4, which are encoded in the nuclear genome. The complex exists as a monomer or a dimer and forms supercomplexes (SCs) in the inner mitochondrial membrane with NADH-ubiquinone oxidoreductase (complex I, CI) and ubiquinol-cytochrome c oxidoreductase (cytochrome b-c1 complex, complex III, CIII), resulting in different assemblies (supercomplex SCI(1)III(2)IV(1) and megacomplex MCI(2)III(2)IV(2)).

The protein localises to the mitochondrion inner membrane. The protein operates within energy metabolism; oxidative phosphorylation. Component of the cytochrome c oxidase, the last enzyme in the mitochondrial electron transport chain which drives oxidative phosphorylation. The respiratory chain contains 3 multisubunit complexes succinate dehydrogenase (complex II, CII), ubiquinol-cytochrome c oxidoreductase (cytochrome b-c1 complex, complex III, CIII) and cytochrome c oxidase (complex IV, CIV), that cooperate to transfer electrons derived from NADH and succinate to molecular oxygen, creating an electrochemical gradient over the inner membrane that drives transmembrane transport and the ATP synthase. Cytochrome c oxidase is the component of the respiratory chain that catalyzes the reduction of oxygen to water. Electrons originating from reduced cytochrome c in the intermembrane space (IMS) are transferred via the dinuclear copper A center (CU(A)) of subunit 2 and heme A of subunit 1 to the active site in subunit 1, a binuclear center (BNC) formed by heme A3 and copper B (CU(B)). The BNC reduces molecular oxygen to 2 water molecules using 4 electrons from cytochrome c in the IMS and 4 protons from the mitochondrial matrix. The protein is Cytochrome c oxidase subunit 6C (COX6C) of Macaca silenus (Lion-tailed macaque).